The following is a 378-amino-acid chain: 1-acyl-sn-glycerol-3-phosphate acyltransferase delta (378 aa).

Residues 11 to 31 traverse the membrane as a helical segment; sequence FLCHLVFCYVFIASGLIINTI. The HXXXXD motif motif lies at 96–101; that stretch reads HKFEID. 3 consecutive transmembrane segments (helical) span residues 125 to 145, 307 to 327, and 338 to 358; these read ELAYVPIIGWMWYFTEMVFCS, TLVNWLFWASLVLYPFFQFLV, and LASFILVFFVASVGVRWMIGV.

The protein belongs to the 1-acyl-sn-glycerol-3-phosphate acyltransferase family.

The protein resides in the endoplasmic reticulum membrane. The enzyme catalyses a 1-acyl-sn-glycero-3-phosphate + an acyl-CoA = a 1,2-diacyl-sn-glycero-3-phosphate + CoA. The catalysed reaction is (4Z,7Z,10Z,13Z,16Z,19Z)-docosahexaenoyl-CoA + 1-hexadecanoyl-sn-glycero-3-phosphate = 1-hexadecanoyl-2-(4Z,7Z,10Z,13Z,16Z,19Z-docosahexaenoyl)-sn-glycero-3-phosphate + CoA. It catalyses the reaction 1-octadecanoyl-sn-glycero-3-phosphate + (9Z,12Z)-octadecadienoyl-CoA = 1-octadecanoyl-2-(9Z,12Z-octadecadienoyl)-sn-glycero-3-phosphate + CoA. It carries out the reaction 1-octadecanoyl-sn-glycero-3-phosphate + (4Z,7Z,10Z,13Z,16Z,19Z)-docosahexaenoyl-CoA = 1-octadecanoyl-2-(4Z,7Z,10Z,13Z,16Z,19Z-docosahexaenoyl)-sn-glycero-3-phosphate + CoA. The enzyme catalyses (4Z,7Z,10Z,13Z,16Z,19Z)-docosahexaenoyl-CoA + 1-(9Z-octadecenoyl)-sn-glycero-3-phosphate = 1-(9Z-octadecenoyl)-2-(4Z,7Z,10Z,13Z,16Z,19Z-docosahexaenoyl)-sn-glycero-3-phosphate + CoA. The protein operates within phospholipid metabolism; CDP-diacylglycerol biosynthesis; CDP-diacylglycerol from sn-glycerol 3-phosphate: step 2/3. In terms of biological role, converts 1-acyl-sn-glycerol-3-phosphate (lysophosphatidic acid or LPA) into 1,2-diacyl-sn-glycerol-3-phosphate (phosphatidic acid or PA) by incorporating an acyl moiety at the sn-2 position of the glycerol backbone. Exhibits high acyl-CoA specificity for polyunsaturated fatty acyl-CoA, especially docosahexaenoyl-CoA (22:6-CoA, DHA-CoA). The protein is 1-acyl-sn-glycerol-3-phosphate acyltransferase delta (AGPAT4) of Pongo abelii (Sumatran orangutan).